The primary structure comprises 303 residues: Probable 5-dehydro-4-deoxyglucarate dehydratase (303 aa).

It belongs to the DapA family.

The enzyme catalyses 5-dehydro-4-deoxy-D-glucarate + H(+) = 2,5-dioxopentanoate + CO2 + H2O. The protein operates within carbohydrate acid metabolism; D-glucarate degradation; 2,5-dioxopentanoate from D-glucarate: step 2/2. In Pseudomonas putida (strain ATCC 700007 / DSM 6899 / JCM 31910 / BCRC 17059 / LMG 24140 / F1), this protein is Probable 5-dehydro-4-deoxyglucarate dehydratase.